A 2179-amino-acid polypeptide reads, in one-letter code: Voltage-dependent L-type calcium channel subunit alpha-1D (2179 aa).

Disordered stretches follow at residues 1–21 (MMMM…EDHA), 30–49 (TRLP…SKQT), and 64–100 (KAAQ…SSNS). The Cytoplasmic portion of the chain corresponds to 1–126 (MMMMMMMKKM…RACISIVEWK (126 aa)). The span at 38-49 (GPTSQPNSSKQT) shows a compositional bias: polar residues. A compositionally biased stretch (basic residues) spans 82-93 (QRKRQQYAKSKK). Residues 113–409 (NPIRRACISI…LVLGVLSGEF (297 aa)) form an I repeat. The chain crosses the membrane as a helical span at residues 127–145 (PFDIFILLAIFANCVALAI). At 146–163 (YIPFPEDDSNSTNHNLEK) the chain is on the extracellular side. The chain crosses the membrane as a helical span at residues 164-183 (VEYAFLIIFTVETFLKIIAY). Residues 184–195 (GLLLHPNAYVRN) lie on the Cytoplasmic side of the membrane. A helical transmembrane segment spans residues 196 to 214 (GWNLLDFVIVIVGLFSVIL). The Extracellular portion of the chain corresponds to 215-235 (EQLTKETEGGNHSSGKSGGFD). A helical membrane pass occupies residues 236 to 254 (VKALRAFRVLRPLRLVSGV). Over 255–273 (PSLQVVLNSIIKAMVPLLH) the chain is Cytoplasmic. Residues 274-293 (IALLVLFVIIIYAIIGLELF) form a helical membrane-spanning segment. Residues 294 to 381 (IGKMHKTCFF…WVNDAIGWEW (88 aa)) lie on the Extracellular side of the membrane. E364 lines the Ca(2+) pocket. The helical transmembrane segment at 382–406 (PWVYFVSLIILGSFFVLNLVLGVLS) threads the bilayer. Topologically, residues 407-543 (GEFSKEREKA…RRCRAAVKSV (137 aa)) are cytoplasmic. The binding to the beta subunit stretch occupies residues 429 to 446 (QQLEEDLKGYLDWITQAE). The segment at 449–480 (DPENEEEGGEEGKRNTSMPTSETESVNTENVS) is disordered. Residues 463 to 479 (NTSMPTSETESVNTENV) are compositionally biased toward polar residues. The stretch at 529–775 (NRFNRRRCRA…VFLAIAVDNL (247 aa)) is one II repeat. Residues 544–563 (TFYWLVIVLVFLNTLTISSE) form a helical membrane-spanning segment. Topologically, residues 564–578 (HYNQPDWLTQIQDIA) are extracellular. The chain crosses the membrane as a helical span at residues 579–597 (NKVLLALFTCEMLVKMYSL). At 598–605 (GLQAYFVS) the chain is on the cytoplasmic side. Residues 606 to 624 (LFNRFDCFVVCGGITETIL) form a helical membrane-spanning segment. At 625-634 (VELELMSPLG) the chain is on the extracellular side. The helical transmembrane segment at 635 to 653 (VSVFRCVRLLRIFKVTRHW) threads the bilayer. At 654 to 672 (TSLSNLVASLLNSMKSIAS) the chain is on the cytoplasmic side. A helical transmembrane segment spans residues 673 to 693 (LLLLLFLFIIIFSLLGMQLFG). The Extracellular portion of the chain corresponds to 694 to 747 (GKFNFDETQTKRSTFDNFPQALLTVFQILTGEDWNAVMYDGIMAYGGPSSSGMI). Position 725 (E725) interacts with Ca(2+). Residues 748–772 (VCIYFIILFICGNYILLNVFLAIAV) form a helical membrane-spanning segment. Positions 771–810 (AVDNLADAESLNTAQKEEAEEKERKKIARKESLENKKNNK) form a coiled coil. Residues 773-906 (DNLADAESLN…VGCHKLINHH (134 aa)) lie on the Cytoplasmic side of the membrane. Basic and acidic residues predominate over residues 786-810 (KEEAEEKERKKIARKESLENKKNNK). Residues 786-870 (KEEAEEKERK…AGPRPRRISE (85 aa)) form a disordered region. Residues 811–822 (PEVNQIANSDNK) are compositionally biased toward polar residues. Residues 845-858 (VGEEEEEEEEDEPE) show a composition bias toward acidic residues. One copy of the III repeat lies at 893–1175 (NPIRVGCHKL…IFVGFVIVTF (283 aa)). A helical transmembrane segment spans residues 907-925 (IFTNLILVFIMLSSAALAA). Over 926 to 941 (EDPIRSHSFRNTILGY) the chain is Extracellular. Residues 942–961 (FDYAFTAIFTVEILLKMTTF) traverse the membrane as a helical segment. Residues 962–973 (GAFLHKGAFCRN) lie on the Cytoplasmic side of the membrane. A helical transmembrane segment spans residues 974–992 (YFNLLDMLVVGVSLVSFGI). Topologically, residues 993–998 (QSSAIS) are extracellular. The chain crosses the membrane as a helical span at residues 999-1018 (VVKILRVLRVLRPLRAINRA). Residues 1019 to 1037 (KGLKHVVQCVFVAIRTIGN) lie on the Cytoplasmic side of the membrane. Residues 1038-1057 (IMIVTTLLQFMFACIGVQLF) form a helical membrane-spanning segment. The Extracellular segment spans residues 1058-1147 (KGKFYRCTDE…VGPVYNYRVE (90 aa)). Residues 1095–1185 (RIWQNSDFNF…QEQGEKEYKN (91 aa)) are dihydropyridine binding. Position 1121 (E1121) interacts with Ca(2+). Residues 1148–1168 (ISIFFIIYIIIVAFFMMNIFV) traverse the membrane as a helical segment. Residues 1169–1225 (GFVIVTFQEQGEKEYKNCELDKNQRQCVEYALKARPLRRYIPKNPYQYKFWYVVNSS) lie on the Cytoplasmic side of the membrane. The stretch at 1212–1487 (NPYQYKFWYV…LFVAVIMDNF (276 aa)) is one IV repeat. Residues 1226–1244 (PFEYMMFVLIMLNTLCLAM) form a helical membrane-spanning segment. The Extracellular portion of the chain corresponds to 1245-1259 (QHYEQSKMFNDAMDI). The chain crosses the membrane as a helical span at residues 1260 to 1279 (LNMVFTGVFTVEMVLKVIAF). At 1280–1286 (KPKGYFS) the chain is on the cytoplasmic side. A helical membrane pass occupies residues 1287–1308 (DAWNTFDSLIVIGSIIDVALSE). The Extracellular segment spans residues 1309 to 1333 (ADPSESETIPLPTATPGNSEESNRI). Residues 1334-1353 (SITFFRLFRVMRLVKLLSRG) traverse the membrane as a helical segment. Over 1354–1372 (EGIRTLLWTFIKSFQALPY) the chain is Cytoplasmic. Residues 1373-1392 (VALLIAMLFFIYAVIGMQMF) form a helical membrane-spanning segment. Topologically, residues 1393 to 1459 (GKVAMRDNNQ…GEEYTCGSNF (67 aa)) are extracellular. The interval 1440-1506 (LCDPDSDYNP…LGPHHLDEFK (67 aa)) is dihydropyridine binding. The interval 1452–1495 (EYTCGSNFAIVYFISFYMLCAFLIINLFVAVIMDNFDYLTRDWS) is phenylalkylamine binding. Residues 1460 to 1484 (AIVYFISFYMLCAFLIINLFVAVIM) form a helical membrane-spanning segment. At 1485-2179 (DNFDYLTRDW…ADEMICITTL (695 aa)) the chain is on the cytoplasmic side. 3 disordered regions span residues 1704–1789 (LLGN…AHGK), 1896–1941 (FERP…RSSF), and 2135–2171 (GDMG…DLAD). The span at 1764–1782 (SIGKQAPTSTNANLNNANM) shows a compositional bias: polar residues. Acidic residues predominate over residues 2156–2171 (SDEEPDPGREEEDLAD).

The protein belongs to the calcium channel alpha-1 subunit (TC 1.A.1.11) family. CACNA1D subfamily. Voltage-dependent calcium channels are multisubunit complexes, consisting of alpha-1, alpha-2, beta and delta subunits in a 1:1:1:1 ratio. The channel activity is directed by the pore-forming and voltage-sensitive alpha-1 subunit. In many cases, this subunit is sufficient to generate voltage-sensitive calcium channel activity. The auxiliary subunits beta and alpha-2/delta linked by a disulfide bridge regulate the channel activity. Interacts (via IQ domain) with CABP1 and CABP4 in a calcium independent manner. Interacts with RIMBP2. As to expression, expressed in the inner hair cells (IHC) of the cochlea.

The protein resides in the membrane. It carries out the reaction Ca(2+)(in) = Ca(2+)(out). Its function is as follows. Voltage-sensitive calcium channels (VSCC) mediate the entry of calcium ions into excitable cells and are also involved in a variety of calcium-dependent processes, including muscle contraction, hormone or neurotransmitter release, gene expression, cell motility, cell division and cell death. The isoform alpha-1D gives rise to L-type calcium currents. Long-lasting (L-type) calcium channels belong to the 'high-voltage activated' (HVA) group. They are blocked by dihydropyridines (DHP), phenylalkylamines, and by benzothiazepines. This Mus musculus (Mouse) protein is Voltage-dependent L-type calcium channel subunit alpha-1D (Cacna1d).